A 150-amino-acid polypeptide reads, in one-letter code: Small ribosomal subunit protein uS11 (150 aa).

A disordered region spans residues 126–150 (GRIEDVTPTPSDSTRRKGGRRGRRL). Residues 141 to 150 (RKGGRRGRRL) show a composition bias toward basic residues.

It belongs to the universal ribosomal protein uS11 family. In terms of assembly, component of the small ribosomal subunit (SSU). Mature N.crassa ribosomes consist of a small (40S) and a large (60S) subunit. The 40S small subunit contains 1 molecule of ribosomal RNA (18S rRNA) and at least 32 different proteins. The large 60S subunit contains 3 rRNA molecules (26S, 5.8S and 5S rRNA) and at least 42 different proteins.

It is found in the cytoplasm. Functionally, component of the ribosome, a large ribonucleoprotein complex responsible for the synthesis of proteins in the cell. The small ribosomal subunit (SSU) binds messenger RNAs (mRNAs) and translates the encoded message by selecting cognate aminoacyl-transfer RNA (tRNA) molecules. The large subunit (LSU) contains the ribosomal catalytic site termed the peptidyl transferase center (PTC), which catalyzes the formation of peptide bonds, thereby polymerizing the amino acids delivered by tRNAs into a polypeptide chain. The nascent polypeptides leave the ribosome through a tunnel in the LSU and interact with protein factors that function in enzymatic processing, targeting, and the membrane insertion of nascent chains at the exit of the ribosomal tunnel. uS11 is involved in nucleolar processing of pre-18S ribosomal RNA and ribosome assembly. The polypeptide is Small ribosomal subunit protein uS11 (rps-14) (Neurospora crassa (strain ATCC 24698 / 74-OR23-1A / CBS 708.71 / DSM 1257 / FGSC 987)).